A 367-amino-acid polypeptide reads, in one-letter code: Putative S-adenosyl-L-methionine-dependent methyltransferase MT0751 (367 aa).

S-adenosyl-L-methionine-binding positions include Asp137 and 166–167; that span reads DL. Positions 348-358 are enriched in polar residues; sequence TRSDAHQASTT. Residues 348–367 are disordered; sequence TRSDAHQASTTAPPPPGLTG.

This sequence belongs to the UPF0677 family.

Exhibits S-adenosyl-L-methionine-dependent methyltransferase activity. The sequence is that of Putative S-adenosyl-L-methionine-dependent methyltransferase MT0751 from Mycobacterium tuberculosis (strain CDC 1551 / Oshkosh).